The chain runs to 424 residues: Histidine--tRNA ligase (424 aa).

Residues 1–22 (MSYRRPKGTYDVYPGDAARQEP) form a disordered region.

The protein belongs to the class-II aminoacyl-tRNA synthetase family. Homodimer.

It localises to the cytoplasm. It catalyses the reaction tRNA(His) + L-histidine + ATP = L-histidyl-tRNA(His) + AMP + diphosphate + H(+). In Rubrobacter xylanophilus (strain DSM 9941 / JCM 11954 / NBRC 16129 / PRD-1), this protein is Histidine--tRNA ligase.